A 311-amino-acid polypeptide reads, in one-letter code: Aspartate carbamoyltransferase catalytic subunit (311 aa).

Carbamoyl phosphate-binding residues include R59 and T60. An L-aspartate-binding site is contributed by K87. Residues R109, H139, and Q142 each contribute to the carbamoyl phosphate site. R172 and R224 together coordinate L-aspartate. Carbamoyl phosphate contacts are provided by A265 and P266.

The protein belongs to the aspartate/ornithine carbamoyltransferase superfamily. ATCase family. Heterododecamer (2C3:3R2) of six catalytic PyrB chains organized as two trimers (C3), and six regulatory PyrI chains organized as three dimers (R2).

The catalysed reaction is carbamoyl phosphate + L-aspartate = N-carbamoyl-L-aspartate + phosphate + H(+). It participates in pyrimidine metabolism; UMP biosynthesis via de novo pathway; (S)-dihydroorotate from bicarbonate: step 2/3. Functionally, catalyzes the condensation of carbamoyl phosphate and aspartate to form carbamoyl aspartate and inorganic phosphate, the committed step in the de novo pyrimidine nucleotide biosynthesis pathway. In Streptococcus pyogenes serotype M18 (strain MGAS8232), this protein is Aspartate carbamoyltransferase catalytic subunit.